Reading from the N-terminus, the 186-residue chain is Large ribosomal subunit protein bL12c (186 aa).

The span at 1-11 (MASTLSTITLR) shows a compositional bias: polar residues. Disordered stretches follow at residues 1–23 (MAST…STHA) and 162–186 (EGVS…VSIA). Residues 1–53 (MASTLSTITLRSPSPSTASSTHASIPFPKKALEFPIRTPKLHHRRATFLRPLA) constitute a chloroplast transit peptide. Positions 12–23 (SPSPSTASSTHA) are enriched in low complexity. A compositionally biased stretch (basic and acidic residues) spans 162–180 (EGVSKDEAEDAKKQLEEAG).

It belongs to the bacterial ribosomal protein bL12 family.

The protein resides in the plastid. Its subcellular location is the chloroplast. The chain is Large ribosomal subunit protein bL12c (RPL12) from Nicotiana tabacum (Common tobacco).